The chain runs to 518 residues: UPF0288 protein Mbar_A0706 (518 aa).

The protein belongs to the UPF0288 family.

In Methanosarcina barkeri (strain Fusaro / DSM 804), this protein is UPF0288 protein Mbar_A0706.